A 92-amino-acid polypeptide reads, in one-letter code: Small ribosomal subunit protein uS19 (92 aa).

Positions 72–92 are disordered; it reads GEFSPTRTYTGHGSDKKSKRG.

Belongs to the universal ribosomal protein uS19 family.

In terms of biological role, protein S19 forms a complex with S13 that binds strongly to the 16S ribosomal RNA. This chain is Small ribosomal subunit protein uS19, found in Gluconobacter oxydans (strain 621H) (Gluconobacter suboxydans).